A 247-amino-acid chain; its full sequence is Chromosome partition protein MukE (247 aa).

The disordered stretch occupies residues 213–247 (AQSLQEEKNGLKDNMDQSAVENEQYFENEENEGIA). Basic and acidic residues predominate over residues 217 to 227 (QEEKNGLKDNM). Over residues 236 to 247 (QYFENEENEGIA) the composition is skewed to acidic residues.

The protein belongs to the MukE family. Interacts, and probably forms a ternary complex, with MukF and MukB. The complex formation is stimulated by calcium or magnesium.

The protein resides in the cytoplasm. Its subcellular location is the nucleoid. Its function is as follows. Involved in chromosome condensation, segregation and cell cycle progression. May participate in facilitating chromosome segregation by condensation DNA from both sides of a centrally located replisome during cell division. Probably acts via its interaction with MukB and MukF. The polypeptide is Chromosome partition protein MukE (Histophilus somni (strain 2336) (Haemophilus somnus)).